The sequence spans 371 residues: Transcription factor MYB12 (371 aa).

2 consecutive HTH myb-type domains span residues 9–61 and 62–116; these read KVGI…INYL and RSDL…SRKL. DNA-binding regions (H-T-H motif) lie at residues 37–61 and 89–112; these read WRSLPKNAGLKRCGKSCRLRWINYL and WSLIAGHLPGRTDNEIKNYWNSHL. The interval 136 to 183 is disordered; sequence NASSAPPPPQAKRRLGRTSRSAMKPKIHRTKTRKTKKTSAPPEPNADV. The span at 146 to 172 shows a compositional bias: basic residues; it reads AKRRLGRTSRSAMKPKIHRTKTRKTKK.

In terms of tissue distribution, expressed in stems and flower buds. Expressed in seedlings, roots, cotyledons and apical meristems.

It localises to the nucleus. Functionally, flavonol-specific transcription activator involved in the regulation of several genes of flavonoid biosynthesis. Activates the expression of CHS, CHI, F3H and FLS1. Controls flavonol biosynthesis mainly in the root. Confers tolerance to UV-B. This Arabidopsis thaliana (Mouse-ear cress) protein is Transcription factor MYB12.